A 401-amino-acid chain; its full sequence is MSLRQLLLRLSGYLGASGPPNRHWWYFRSLDTISSVGSWRGRSSRSPAHWNQVVSEAEKIVGYPASFMSLRCLLSDELSNVAMQVRKLVGTQHPLLTTARGFVHDSRHNLQLRGLVVLLISKAAGPSTRNSSSQNYDMVSGIYSCQRNLAEITELIHTALLVHRGIVNLSELQSSDGPLKDMKFGNKIAVLSGDFLLANACNGLALLQNTKVVELLASALMDLVQGIYQENSASTQGNPIPDDIRISTWKEQTFLSHCALLAKSCKAAMELAKHDAAVQDMAFQYGKHMAMSHKINSDLQPFIKDKASDSKTFNLNSAPVVLHQEFLGRDLWIKQIGEAQEKGRLNYTKLRETIKAGKGVTSAIDLCRYHGNKALEALESFPPSEARSALENIVFAVTRFS.

This sequence belongs to the FPP/GGPP synthase family. As to quaternary structure, heterotetramer composed of 2 PDSS1/DPS1 and 2 PDSS2/DLP1 subunits.

It is found in the mitochondrion. It catalyses the reaction 7 isopentenyl diphosphate + (2E,6E)-farnesyl diphosphate = all-trans-decaprenyl diphosphate + 7 diphosphate. It carries out the reaction 6 isopentenyl diphosphate + (2E,6E)-farnesyl diphosphate = all-trans-nonaprenyl diphosphate + 6 diphosphate. It participates in cofactor biosynthesis; ubiquinone biosynthesis. Its function is as follows. Heterotetrameric enzyme that catalyzes the condensation of farnesyl diphosphate (FPP), which acts as a primer, and isopentenyl diphosphate (IPP) to produce prenyl diphosphates of varying chain lengths and participates in the determination of the side chain of ubiquinone. Supplies nona and decaprenyl diphosphate, the precursors for the side chain of the isoprenoid quinones ubiquinone-9 (Q9) and ubiquinone-10 (Q10) respectively. The enzyme adds isopentenyl diphosphate molecules sequentially to farnesyl diphosphate with trans stereochemistry. May play a role during cerebellar development. May regulate mitochondrial respiratory chain function. In Rattus norvegicus (Rat), this protein is All trans-polyprenyl-diphosphate synthase PDSS2.